A 333-amino-acid chain; its full sequence is 2-oxoglutarate-dependent dioxygenase ucsF (333 aa).

Positions 174–296 constitute a Fe2OG dioxygenase domain; the sequence is NASELRLNHY…RYSIAYLCKA (123 aa). Residues H202, D204, and H264 each coordinate Fe cation. A 2-oxoglutarate-binding site is contributed by R287.

The protein belongs to the iron/ascorbate-dependent oxidoreductase family. Requires Fe(2+) as cofactor.

It functions in the pathway mycotoxin biosynthesis. Functionally, 2-oxoglutarate-dependent dioxygenase; part of the gene cluster that mediates the biosynthesis of UCS1025A, a member of the pyrrolizidinone family that acts as a strong telomerase inhibitor and displays potent antibacterial and antitumor properties. These compounds share a hemiaminal-containing pyrrolizidinone core fused with a gamma-lactone, giving a furopyrrolizidine that is connected to a decalin fragment. The polyketide synthase module (PKS) of the PKS-NRPS ucsA is responsible for the synthesis of the polyketide backbone via the condensation of an acetyl-CoA starter unit with 6 malonyl-CoA units. The downstream nonribosomal peptide synthetase (NRPS) module then amidates the carboxyl end of the polyketide with a 2S,3S-methylproline derived from L-isoleucine by the 2-oxoglutarate-dependent dioxygenase ucsF which converts L-isoleucine to (4S,5S)-4-methylpyrroline-5-carboxylate that is further converted to 2S,3S-methylproline by the pyrroline-5-carboxylate reductase ucsG. Reductive release of the completed aminoacyl polyketide from the assembly line can form the 3-pyrrolin-2-one structure via an intramolecular Knoevenagel reaction. Because ucsA lacks a designated enoylreductase (ER) domain, the required activity is provided the enoyl reductase ucsL. This keto acyclic precursor is the substrate of the Diels-Alderase ucsH, that catalyzes the Diels-Alder cycloaddition. Oxidation of the 3S-methyl group to a carboxylate by the cytochrome P450 monooxygenase ucsK allows an oxa-Michael cyclization that might involve the reductase/dehydrogenase ucsI and which furnishes the furopyrrolizidine. The oxidase ucsJ likely plays a critical role in stereoselective reduction of the C5-C6 double bond to afford the required R-configured carboxylate group. Further enolization and oxidation at C5 by an unidentified enzyme affords the last intermediate that can undergo oxa-Michael cyclization to yield UCS1025A. The polypeptide is 2-oxoglutarate-dependent dioxygenase ucsF (Acremonium sp).